The primary structure comprises 377 residues: Erythronate-4-phosphate dehydrogenase (377 aa).

Positions 45 and 67 each coordinate substrate. NAD(+) is bound by residues D147, 210–212 (ASR), and D236. R212 is an active-site residue. E241 is an active-site residue. The active-site Proton donor is the H258. G261 contacts NAD(+). Y262 is a substrate binding site.

This sequence belongs to the D-isomer specific 2-hydroxyacid dehydrogenase family. PdxB subfamily. In terms of assembly, homodimer.

It localises to the cytoplasm. The catalysed reaction is 4-phospho-D-erythronate + NAD(+) = (R)-3-hydroxy-2-oxo-4-phosphooxybutanoate + NADH + H(+). It functions in the pathway cofactor biosynthesis; pyridoxine 5'-phosphate biosynthesis; pyridoxine 5'-phosphate from D-erythrose 4-phosphate: step 2/5. Its function is as follows. Catalyzes the oxidation of erythronate-4-phosphate to 3-hydroxy-2-oxo-4-phosphonooxybutanoate. This chain is Erythronate-4-phosphate dehydrogenase, found in Aeromonas salmonicida (strain A449).